The primary structure comprises 74 residues: Mitochondrial import receptor subunit TOM6 homolog (74 aa).

A compositionally biased stretch (low complexity) spans M1–A14. Residues M1–V24 are disordered. A2 carries the post-translational modification N-acetylalanine.

Belongs to the Tom6 family. Forms part of the preprotein translocase complex of the outer mitochondrial membrane (TOM complex) which consists of at least 7 different proteins (TOMM5, TOMM6, TOMM7, TOMM20, TOMM22, TOMM40 and TOMM70).

The protein resides in the mitochondrion outer membrane. The chain is Mitochondrial import receptor subunit TOM6 homolog (TOMM6) from Bos taurus (Bovine).